The following is a 364-amino-acid chain: Aminomethyltransferase (364 aa).

It belongs to the GcvT family. In terms of assembly, the glycine cleavage system is composed of four proteins: P, T, L and H.

It carries out the reaction N(6)-[(R)-S(8)-aminomethyldihydrolipoyl]-L-lysyl-[protein] + (6S)-5,6,7,8-tetrahydrofolate = N(6)-[(R)-dihydrolipoyl]-L-lysyl-[protein] + (6R)-5,10-methylene-5,6,7,8-tetrahydrofolate + NH4(+). Functionally, the glycine cleavage system catalyzes the degradation of glycine. This chain is Aminomethyltransferase, found in Shewanella baltica (strain OS155 / ATCC BAA-1091).